Consider the following 149-residue polypeptide: Putative pre-16S rRNA nuclease (149 aa).

This sequence belongs to the YqgF nuclease family.

It localises to the cytoplasm. In terms of biological role, could be a nuclease involved in processing of the 5'-end of pre-16S rRNA. This is Putative pre-16S rRNA nuclease from Burkholderia orbicola (strain MC0-3).